The primary structure comprises 223 residues: Deoxyribose-phosphate aldolase (223 aa).

Aspartate 89 (proton donor/acceptor) is an active-site residue. Lysine 152 functions as the Schiff-base intermediate with acetaldehyde in the catalytic mechanism. Catalysis depends on lysine 181, which acts as the Proton donor/acceptor.

Belongs to the DeoC/FbaB aldolase family. DeoC type 1 subfamily.

It localises to the cytoplasm. It carries out the reaction 2-deoxy-D-ribose 5-phosphate = D-glyceraldehyde 3-phosphate + acetaldehyde. It participates in carbohydrate degradation; 2-deoxy-D-ribose 1-phosphate degradation; D-glyceraldehyde 3-phosphate and acetaldehyde from 2-deoxy-alpha-D-ribose 1-phosphate: step 2/2. In terms of biological role, catalyzes a reversible aldol reaction between acetaldehyde and D-glyceraldehyde 3-phosphate to generate 2-deoxy-D-ribose 5-phosphate. This Bacillus subtilis (strain 168) protein is Deoxyribose-phosphate aldolase.